The following is a 102-amino-acid chain: Large ribosomal subunit protein bL21 (102 aa).

Belongs to the bacterial ribosomal protein bL21 family. As to quaternary structure, part of the 50S ribosomal subunit. Contacts protein L20.

Its function is as follows. This protein binds to 23S rRNA in the presence of protein L20. This chain is Large ribosomal subunit protein bL21, found in Nitratiruptor sp. (strain SB155-2).